The chain runs to 137 residues: Phosphoribosyl-AMP cyclohydrolase (137 aa).

Aspartate 84 contacts Mg(2+). Cysteine 85 lines the Zn(2+) pocket. Positions 86 and 88 each coordinate Mg(2+). 2 residues coordinate Zn(2+): cysteine 101 and cysteine 108.

Belongs to the PRA-CH family. Homodimer. It depends on Mg(2+) as a cofactor. Zn(2+) serves as cofactor.

Its subcellular location is the cytoplasm. The enzyme catalyses 1-(5-phospho-beta-D-ribosyl)-5'-AMP + H2O = 1-(5-phospho-beta-D-ribosyl)-5-[(5-phospho-beta-D-ribosylamino)methylideneamino]imidazole-4-carboxamide. The protein operates within amino-acid biosynthesis; L-histidine biosynthesis; L-histidine from 5-phospho-alpha-D-ribose 1-diphosphate: step 3/9. Functionally, catalyzes the hydrolysis of the adenine ring of phosphoribosyl-AMP. This chain is Phosphoribosyl-AMP cyclohydrolase, found in Pelodictyon phaeoclathratiforme (strain DSM 5477 / BU-1).